The primary structure comprises 299 residues: Ribosomal RNA small subunit methyltransferase H (299 aa).

Residues 32-34 (AGH), D52, F79, D100, and Q107 contribute to the S-adenosyl-L-methionine site.

Belongs to the methyltransferase superfamily. RsmH family.

The protein localises to the cytoplasm. The catalysed reaction is cytidine(1402) in 16S rRNA + S-adenosyl-L-methionine = N(4)-methylcytidine(1402) in 16S rRNA + S-adenosyl-L-homocysteine + H(+). In terms of biological role, specifically methylates the N4 position of cytidine in position 1402 (C1402) of 16S rRNA. In Mycoplasmopsis pulmonis (strain UAB CTIP) (Mycoplasma pulmonis), this protein is Ribosomal RNA small subunit methyltransferase H.